Reading from the N-terminus, the 410-residue chain is Peptidase T (410 aa).

H77 serves as a coordination point for Zn(2+). D79 is a catalytic residue. D140 contacts Zn(2+). The Proton acceptor role is filled by E174. Positions 175, 197, and 379 each coordinate Zn(2+).

This sequence belongs to the peptidase M20B family. The cofactor is Zn(2+).

It is found in the cytoplasm. It carries out the reaction Release of the N-terminal residue from a tripeptide.. Functionally, cleaves the N-terminal amino acid of tripeptides. This chain is Peptidase T, found in Desulfitobacterium hafniense (strain Y51).